Consider the following 539-residue polypeptide: Probable K(+)/H(+) antiporter subunit D (539 aa).

Helical transmembrane passes span 4-23 (WLDHLLILPILLPLAVAAVL), 36-58 (AIGFASTLVVFILSMILMRLAAA), 78-100 (FGIVLVLDRLSALMLCLTSGLAL), 113-135 (AGHHFHSLFQLLVAGLNGAFLTG), 140-162 (LFVFFEMMLAASYGLLLHGSGPL), 175-197 (LAASALFLIGVSLIYGAAGTLNM), 217-239 (MGSAILGVAFLVKAGMWPLSFWL), 251-273 (AGVFAVLTKVGIYVIIRLHLLVF), 283-305 (FGQEWLVTGGMLTIAFGGIGVLA), 312-331 (LAGYSVLVSSGTLLAAVGLG), 335-357 (MLAGALFYLVSSTLTIGAFFLLI), 400-422 (VLGLCFCLCALLLAGLPPLSGFI), 442-464 (AMSAADWTYVTLLILSGLAAMIA), and 484-506 (VVVIEITPVVVLLGACIFLSLQA).

The protein belongs to the CPA3 antiporters (TC 2.A.63) subunit D family. As to quaternary structure, may form a hetero-oligomeric complex that consists of six subunits: PhaAB, PhaC, PhaD, PhaE, PhaF and PhaG.

The protein localises to the cell membrane. Functionally, part of a K(+) efflux system which is required for the adaptation of R.meliloti to alkaline pH as well as for the infection process during symbiotic nodule development. The sequence is that of Probable K(+)/H(+) antiporter subunit D (phaD) from Rhizobium meliloti (strain 1021) (Ensifer meliloti).